Reading from the N-terminus, the 485-residue chain is Zinc finger protein 639 (485 aa).

Positions 1–14 (MNEYPKKRKRKTLH) are enriched in basic residues. 2 disordered regions span residues 1-23 (MNEYPKKRKRKTLHPSRYSDSSG) and 54-80 (DNKDDDSDPETANDLPKFADGTKARNR). Position 60 is a phosphoserine (serine 60). Residue lysine 76 forms a Glycyl lysine isopeptide (Lys-Gly) (interchain with G-Cter in SUMO2) linkage. Residue serine 88 is modified to Phosphoserine. A disordered region spans residues 115–136 (ASPESVHQHTQEESPIEVHTSE). Residues lysine 177, lysine 181, and lysine 226 each participate in a glycyl lysine isopeptide (Lys-Gly) (interchain with G-Cter in SUMO2) cross-link. C2H2-type zinc fingers lie at residues 204–227 (YKCELCEFNSKYFSDLKQHVILKH), 233–255 (NVCRVCKESFSTNMLLIEHAKLH), 260–283 (YICKYCDYKTVIFENLSQHIADTH), 289–311 (YWCEQCDVQFSSSSELYLHFQEH), 374–397 (FVCQVCGFRSRLHTNVNRHVAIEH), 403–425 (HVCDDCGKGFSSMLEYCKHLNSH), 431–454 (YLCQYCEYSTGQIDDLKIHLDFKH), and 460–482 (HKCSECLMRFGNERDLLGHLQVH). The segment at 371–455 (KNFFVCQVCG…LKIHLDFKHS (85 aa)) is interaction with CTNNA2.

This sequence belongs to the krueppel C2H2-type zinc-finger protein family. As to quaternary structure, interacts with CTNNA2.

It is found in the nucleus. Binds DNA and may function as a transcriptional repressor. The sequence is that of Zinc finger protein 639 (Znf639) from Mus musculus (Mouse).